Reading from the N-terminus, the 548-residue chain is Membrane protein insertase YidC (548 aa).

A helical membrane pass occupies residues 6 to 26 (NLLVIALLFVSFMIWQAWEQD). The segment at 28-58 (NPQPQQQQTTQTTTTAAGSAADQGVPASGQG) is disordered. Low complexity predominate over residues 29–42 (PQPQQQQTTQTTTT). 4 helical membrane-spanning segments follow: residues 350-370 (FLGN…GIMY), 420-440 (LGGC…YYML), 458-478 (LSAQ…MFFI), and 499-519 (PVIF…YYIV).

It belongs to the OXA1/ALB3/YidC family. Type 1 subfamily. Interacts with the Sec translocase complex via SecD. Specifically interacts with transmembrane segments of nascent integral membrane proteins during membrane integration.

The protein resides in the cell inner membrane. Functionally, required for the insertion and/or proper folding and/or complex formation of integral membrane proteins into the membrane. Involved in integration of membrane proteins that insert both dependently and independently of the Sec translocase complex, as well as at least some lipoproteins. Aids folding of multispanning membrane proteins. The sequence is that of Membrane protein insertase YidC from Enterobacter sp. (strain 638).